Reading from the N-terminus, the 599-residue chain is Elongation factor 4 (599 aa).

The region spanning 4–186 is the tr-type G domain; sequence KYIRNFSIIA…AIVEKVPPPK (183 aa). Residues 16–21 and 133–136 contribute to the GTP site; these read DHGKST and NKID.

The protein belongs to the TRAFAC class translation factor GTPase superfamily. Classic translation factor GTPase family. LepA subfamily.

The protein resides in the cell inner membrane. It carries out the reaction GTP + H2O = GDP + phosphate + H(+). Required for accurate and efficient protein synthesis under certain stress conditions. May act as a fidelity factor of the translation reaction, by catalyzing a one-codon backward translocation of tRNAs on improperly translocated ribosomes. Back-translocation proceeds from a post-translocation (POST) complex to a pre-translocation (PRE) complex, thus giving elongation factor G a second chance to translocate the tRNAs correctly. Binds to ribosomes in a GTP-dependent manner. The chain is Elongation factor 4 from Bdellovibrio bacteriovorus (strain ATCC 15356 / DSM 50701 / NCIMB 9529 / HD100).